Consider the following 187-residue polypeptide: Large ribosomal subunit protein uL5 (187 aa).

It belongs to the universal ribosomal protein uL5 family. As to quaternary structure, part of the 50S ribosomal subunit; part of the 5S rRNA/L5/L18/L25 subcomplex. Contacts the 5S rRNA and the P site tRNA. Forms a bridge to the 30S subunit in the 70S ribosome.

Functionally, this is one of the proteins that bind and probably mediate the attachment of the 5S RNA into the large ribosomal subunit, where it forms part of the central protuberance. In the 70S ribosome it contacts protein S13 of the 30S subunit (bridge B1b), connecting the 2 subunits; this bridge is implicated in subunit movement. Contacts the P site tRNA; the 5S rRNA and some of its associated proteins might help stabilize positioning of ribosome-bound tRNAs. The protein is Large ribosomal subunit protein uL5 of Gluconobacter oxydans (strain 621H) (Gluconobacter suboxydans).